The sequence spans 351 residues: Histidinol-phosphate aminotransferase (351 aa).

At Lys-209 the chain carries N6-(pyridoxal phosphate)lysine.

It belongs to the class-II pyridoxal-phosphate-dependent aminotransferase family. Histidinol-phosphate aminotransferase subfamily. In terms of assembly, homodimer. It depends on pyridoxal 5'-phosphate as a cofactor.

The catalysed reaction is L-histidinol phosphate + 2-oxoglutarate = 3-(imidazol-4-yl)-2-oxopropyl phosphate + L-glutamate. Its pathway is amino-acid biosynthesis; L-histidine biosynthesis; L-histidine from 5-phospho-alpha-D-ribose 1-diphosphate: step 7/9. The polypeptide is Histidinol-phosphate aminotransferase (Chromohalobacter salexigens (strain ATCC BAA-138 / DSM 3043 / CIP 106854 / NCIMB 13768 / 1H11)).